The sequence spans 543 residues: Chaperonin GroEL (543 aa).

Residues 29–32, Lys50, 86–90, Gly415, and Asp495 contribute to the ATP site; these read TLGP and DGTTT.

This sequence belongs to the chaperonin (HSP60) family. Forms a cylinder of 14 subunits composed of two heptameric rings stacked back-to-back. Interacts with the co-chaperonin GroES.

The protein resides in the cytoplasm. The enzyme catalyses ATP + H2O + a folded polypeptide = ADP + phosphate + an unfolded polypeptide.. Functionally, together with its co-chaperonin GroES, plays an essential role in assisting protein folding. The GroEL-GroES system forms a nano-cage that allows encapsulation of the non-native substrate proteins and provides a physical environment optimized to promote and accelerate protein folding. This Flavobacterium johnsoniae (strain ATCC 17061 / DSM 2064 / JCM 8514 / BCRC 14874 / CCUG 350202 / NBRC 14942 / NCIMB 11054 / UW101) (Cytophaga johnsonae) protein is Chaperonin GroEL.